The primary structure comprises 157 residues: Transcription elongation factor GreA (157 aa).

Positions 12 to 74 form a coiled coil; the sequence is LKKLEEELEY…TLEAMLKNAK (63 aa).

This sequence belongs to the GreA/GreB family.

In terms of biological role, necessary for efficient RNA polymerase transcription elongation past template-encoded arresting sites. The arresting sites in DNA have the property of trapping a certain fraction of elongating RNA polymerases that pass through, resulting in locked ternary complexes. Cleavage of the nascent transcript by cleavage factors such as GreA or GreB allows the resumption of elongation from the new 3'terminus. GreA releases sequences of 2 to 3 nucleotides. This Thermoanaerobacter pseudethanolicus (strain ATCC 33223 / 39E) (Clostridium thermohydrosulfuricum) protein is Transcription elongation factor GreA.